The primary structure comprises 237 residues: Ribonuclease PH (237 aa).

Residues R86 and 124–126 contribute to the phosphate site; that span reads GTR.

It belongs to the RNase PH family. In terms of assembly, homohexameric ring arranged as a trimer of dimers.

It catalyses the reaction tRNA(n+1) + phosphate = tRNA(n) + a ribonucleoside 5'-diphosphate. In terms of biological role, phosphorolytic 3'-5' exoribonuclease that plays an important role in tRNA 3'-end maturation. Removes nucleotide residues following the 3'-CCA terminus of tRNAs; can also add nucleotides to the ends of RNA molecules by using nucleoside diphosphates as substrates, but this may not be physiologically important. Probably plays a role in initiation of 16S rRNA degradation (leading to ribosome degradation) during starvation. The protein is Ribonuclease PH of Shewanella pealeana (strain ATCC 700345 / ANG-SQ1).